Reading from the N-terminus, the 184-residue chain is Photosystem I assembly protein Ycf4 (184 aa).

2 helical membrane-spanning segments follow: residues V22–S42 and I57–S77.

The protein belongs to the Ycf4 family.

It localises to the plastid. Its subcellular location is the chloroplast thylakoid membrane. In terms of biological role, seems to be required for the assembly of the photosystem I complex. This Morus indica (Mulberry) protein is Photosystem I assembly protein Ycf4.